The sequence spans 258 residues: Regulatory protein RecX (258 aa).

Belongs to the RecX family.

The protein localises to the cytoplasm. Functionally, modulates RecA activity. This is Regulatory protein RecX from Streptococcus pyogenes serotype M5 (strain Manfredo).